Here is a 265-residue protein sequence, read N- to C-terminus: Sulfur carrier protein FdhD (265 aa).

The active-site Cysteine persulfide intermediate is C107.

Belongs to the FdhD family.

It localises to the cytoplasm. Functionally, required for formate dehydrogenase (FDH) activity. Acts as a sulfur carrier protein that transfers sulfur from IscS to the molybdenum cofactor prior to its insertion into FDH. This Staphylococcus aureus (strain MRSA252) protein is Sulfur carrier protein FdhD.